Here is a 405-residue protein sequence, read N- to C-terminus: Magnesium-protoporphyrin IX monomethyl ester [oxidative] cyclase, chloroplastic (405 aa).

The N-terminal 44 residues, 1 to 44, are a transit peptide targeting the chloroplast; that stretch reads MAAEMALVKPITPKFINPMRTFSSSSKFSTIKMSATSQSNTTTT. The span at 33 to 47 shows a compositional bias: low complexity; it reads MSATSQSNTTTTATK. Positions 33–54 are disordered; the sequence is MSATSQSNTTTTATKPSKKGNK.

Belongs to the AcsF family. It depends on Fe cation as a cofactor.

It is found in the plastid. The protein localises to the chloroplast. It catalyses the reaction Mg-protoporphyrin IX 13-monomethyl ester + 3 NADPH + 3 O2 + 2 H(+) = 3,8-divinyl protochlorophyllide a + 3 NADP(+) + 5 H2O. Its pathway is porphyrin-containing compound metabolism; chlorophyll biosynthesis. Catalyzes the formation of the isocyclic ring in chlorophyll biosynthesis. Mediates the cyclase reaction, which results in the formation of divinylprotochlorophyllide (Pchlide) characteristic of all chlorophylls from magnesium-protoporphyrin IX 13-monomethyl ester (MgPMME). This Euphorbia esula (Leafy spurge) protein is Magnesium-protoporphyrin IX monomethyl ester [oxidative] cyclase, chloroplastic (CRD1).